A 196-amino-acid polypeptide reads, in one-letter code: ECF RNA polymerase sigma factor SigM (196 aa).

Residues 39–105 are sigma-70 factor domain-2; the sequence is LFRRHHRQLH…ACLDRLRRAK (67 aa). The Polymerase core binding signature appears at 63-66; the sequence is DALQ. The segment at 130–181 is sigma-70 factor domain-4; that stretch reads AVQRALMRLPVEQRAAVVAVDMQGYSIADTARMLGVAEGTVKSRCARARARL. The H-T-H motif DNA-binding region spans 156-175; sequence IADTARMLGVAEGTVKSRCA.

It belongs to the sigma-70 factor family. ECF subfamily. As to quaternary structure, interacts transiently with the RNA polymerase catalytic core formed by RpoA, RpoB, RpoC and RpoZ (2 alpha, 1 beta, 1 beta' and 1 omega subunit) to form the RNA polymerase holoenzyme that can initiate transcription. Interacts (via sigma-70 factor domain-4) with anti-sigma-M factor RsmA (AC L7N5D7).

Its function is as follows. Sigma factors are initiation factors that promote the attachment of RNA polymerase to specific initiation sites and are then released. Extracytoplasmic function (ECF) sigma factors are held in an inactive form by an anti-sigma factor (RsaM, AC L7N5D7) until released by regulated intramembrane proteolysis. This sigma factor is required for the synthesis of surface or secreted molecules. The chain is ECF RNA polymerase sigma factor SigM (sigM) from Mycobacterium tuberculosis (strain ATCC 25618 / H37Rv).